The following is a 318-amino-acid chain: Ribokinase (318 aa).

Substrate contacts are provided by residues 11–13 (NTD), 41–45 (GKGAN), and Glu-146. Residues Asn-190 and 229–234 (TLGSQG) each bind ATP. K(+) is bound by residues Asp-256 and Thr-258. Residue 261–262 (GD) participates in ATP binding. Asp-262 is a substrate binding site. Asp-262 functions as the Proton acceptor in the catalytic mechanism. Residues Thr-292, Arg-295, Gly-297, and Ser-301 each contribute to the K(+) site.

Belongs to the carbohydrate kinase PfkB family. Ribokinase subfamily. In terms of assembly, homodimer. Requires Mg(2+) as cofactor.

The protein localises to the cytoplasm. It is found in the nucleus. It carries out the reaction D-ribose + ATP = D-ribose 5-phosphate + ADP + H(+). It functions in the pathway carbohydrate metabolism; D-ribose degradation; D-ribose 5-phosphate from beta-D-ribopyranose: step 2/2. With respect to regulation, activated by a monovalent cation that binds near, but not in, the active site. The most likely occupant of the site in vivo is potassium. Ion binding induces a conformational change that may alter substrate affinity. In terms of biological role, catalyzes the phosphorylation of ribose at O-5 in a reaction requiring ATP and magnesium. The resulting D-ribose-5-phosphate can then be used either for sythesis of nucleotides, histidine, and tryptophan, or as a component of the pentose phosphate pathway. This chain is Ribokinase, found in Schizosaccharomyces pombe (strain 972 / ATCC 24843) (Fission yeast).